A 469-amino-acid chain; its full sequence is F-box only protein 3 (469 aa).

The region spanning 10–56 (PLTLESLPTDPLLLILSFLDYRDLINCCYVSRRLSQLSSHDPLWRRH) is the F-box domain. Residues 278–408 (VATTGDITVS…FHMACPTFRV (131 aa)) form the ApaG domain. Over residues 419–449 (EYEEMEEEEEEEEEEDDDDSADMDESDDDEE) the composition is skewed to acidic residues. The interval 419-454 (EYEEMEEEEEEEEEEDDDDSADMDESDDDEEERQRR) is disordered.

In terms of assembly, part of a SCF (SKP1-cullin-F-box) protein ligase complex SCF(FBXO3) consisting of FBXO3, SKP1, CUL1 and RBX1. Interacts with PML, interaction is direct and takes place either alone or within the SCF complex.

It localises to the nucleus. The protein operates within protein modification; protein ubiquitination. Functionally, substrate recognition component of the SCF (SKP1-CUL1-F-box protein)-type E3 ubiquitin ligase complex, SCF(FBXO3), which mediates the ubiquitination and subsequent proteasomal degradation of target proteins. Mediates the ubiquitination of HIPK2 and probably that of EP300, leading to rapid degradation by the proteasome. In the presence of PML, HIPK2 ubiquitination still occurs, but degradation is prevented. PML, HIPK2 and FBXO3 may act synergically to activate p53/TP53-dependent transactivation. The SCF(FBXO3) also acts as a regulator of inflammation by mediating ubiquitination and degradation of FBXL2 in response to lipopolysaccharide (LPS). The SCF(FBXO3) complex specifically recognizes FBXL2 phosphorylated at 'Thr-404' and promotes its ubiquitination. The protein is F-box only protein 3 (FBXO3) of Bos taurus (Bovine).